Consider the following 111-residue polypeptide: Nascent polypeptide-associated complex protein (111 aa).

In terms of domain architecture, NAC-A/B spans 3–72 (GMNPRQMKKL…EEVREVLEIS (70 aa)).

It belongs to the NAC-alpha family. As to quaternary structure, homodimer. Interacts with the ribosome. Binds ribosomal RNA.

Functionally, contacts the emerging nascent chain on the ribosome. The protein is Nascent polypeptide-associated complex protein of Thermococcus kodakarensis (strain ATCC BAA-918 / JCM 12380 / KOD1) (Pyrococcus kodakaraensis (strain KOD1)).